Here is a 155-residue protein sequence, read N- to C-terminus: Protein SREK1IP1 (155 aa).

Residues Ala13–Asn30 form a CCHC-type zinc finger. The interval Asp43–Asp155 is disordered. The span at Glu58 to Lys74 shows a compositional bias: basic and acidic residues. The span at Lys75–His93 shows a compositional bias: basic residues. The span at Ser94–Lys103 shows a compositional bias: basic and acidic residues. The segment covering Ala104–Arg137 has biased composition (basic residues). Low complexity predominate over residues Ser140 to Asp155.

Possible splicing regulator involved in the control of cellular survival. The chain is Protein SREK1IP1 (srek1ip1) from Xenopus tropicalis (Western clawed frog).